Here is a 327-residue protein sequence, read N- to C-terminus: ATP-dependent 6-phosphofructokinase (327 aa).

An ATP-binding site is contributed by glycine 12. ADP-binding positions include 22–26 (RGVVR) and 55–60 (RYSVSD). ATP-binding positions include 73 to 74 (RF) and 103 to 106 (GDGS). Mg(2+) is bound at residue aspartate 104. 127–129 (TID) contacts substrate. Aspartate 129 acts as the Proton acceptor in catalysis. Arginine 156 provides a ligand contact to ADP. Substrate is bound by residues arginine 164 and 171 to 173 (MGR). ADP contacts are provided by residues 187–189 (GCE), lysine 213, and 215–217 (KKH). Residues glutamate 224, arginine 245, and 251 to 254 (HIQR) contribute to the substrate site.

The protein belongs to the phosphofructokinase type A (PFKA) family. ATP-dependent PFK group I subfamily. Prokaryotic clade 'B1' sub-subfamily. In terms of assembly, homotetramer. Mg(2+) serves as cofactor.

Its subcellular location is the cytoplasm. It carries out the reaction beta-D-fructose 6-phosphate + ATP = beta-D-fructose 1,6-bisphosphate + ADP + H(+). The protein operates within carbohydrate degradation; glycolysis; D-glyceraldehyde 3-phosphate and glycerone phosphate from D-glucose: step 3/4. Allosterically activated by ADP and other diphosphonucleosides, and allosterically inhibited by phosphoenolpyruvate. Functionally, catalyzes the phosphorylation of D-fructose 6-phosphate to fructose 1,6-bisphosphate by ATP, the first committing step of glycolysis. This chain is ATP-dependent 6-phosphofructokinase, found in Yersinia pseudotuberculosis serotype O:1b (strain IP 31758).